The following is a 722-amino-acid chain: Protein Aster-A (722 aa).

The disordered stretch occupies residues Met-1–Thr-62. Residues Ser-8 to Ser-18 are compositionally biased toward low complexity. In terms of domain architecture, GRAM spans Glu-93 to Lys-160. The tract at residues Ile-256–Leu-336 is disordered. A phosphoserine mark is found at Ser-265, Ser-269, Ser-273, and Ser-417. Residues Ser-369–Leu-540 form the VASt domain. The interval Leu-561–Gln-600 is disordered. Basic and acidic residues predominate over residues Gly-565–Pro-575. Over residues Cys-578–Ser-594 the composition is skewed to polar residues. The chain crosses the membrane as a helical span at residues Ala-609–Tyr-629.

Highly expressed in the brain.

Its subcellular location is the endoplasmic reticulum membrane. It is found in the cell membrane. The protein resides in the cytoplasmic vesicle. It localises to the autophagosome. Its function is as follows. Cholesterol transporter that mediates non-vesicular transport of cholesterol from the plasma membrane (PM) to the endoplasmic reticulum (ER). Contains unique domains for binding cholesterol and the PM, thereby serving as a molecular bridge for the transfer of cholesterol from the PM to the ER. Plays a crucial role in cholesterol homeostasis and has the unique ability to localize to the PM based on the level of membrane cholesterol. In lipid-poor conditions localizes to the ER membrane and in response to excess cholesterol in the PM is recruited to the endoplasmic reticulum-plasma membrane contact sites (EPCS) which is mediated by the GRAM domain. At the EPCS, the sterol-binding VASt/ASTER domain binds to the cholesterol in the PM and facilitates its transfer from the PM to ER. May play a role in tumor progression. Plays a role in autophagy regulation and is required for biogenesis of the autophagosome. This function in autophagy requires its cholesterol-transfer activity. This chain is Protein Aster-A, found in Mus musculus (Mouse).